Here is a 373-residue protein sequence, read N- to C-terminus: Glutamate 5-kinase (373 aa).

ATP is bound at residue Lys-15. The substrate site is built by Ser-55, Asp-142, and Asn-154. ATP contacts are provided by residues 174 to 175 (TD) and 216 to 222 (TGGMATK). The PUA domain maps to 281-359 (AGSIVVDAGA…SEIEGILGFR (79 aa)).

The protein belongs to the glutamate 5-kinase family.

The protein resides in the cytoplasm. It catalyses the reaction L-glutamate + ATP = L-glutamyl 5-phosphate + ADP. Its pathway is amino-acid biosynthesis; L-proline biosynthesis; L-glutamate 5-semialdehyde from L-glutamate: step 1/2. In terms of biological role, catalyzes the transfer of a phosphate group to glutamate to form L-glutamate 5-phosphate. This chain is Glutamate 5-kinase, found in Citrifermentans bemidjiense (strain ATCC BAA-1014 / DSM 16622 / JCM 12645 / Bem) (Geobacter bemidjiensis).